Reading from the N-terminus, the 358-residue chain is Fructose-bisphosphate aldolase 5, cytosolic (358 aa).

Serine 2 is modified (N-acetylserine). Arginine 39 is a binding site for substrate. Cysteine 68 bears the S-glutathionyl cysteine; transient mark. At cysteine 173 the chain carries S-glutathionyl cysteine; transient; alternate. At cysteine 173 the chain carries S-nitrosocysteine; transient; alternate. Glutamate 183 serves as the catalytic Proton acceptor. Residue lysine 225 is the Schiff-base intermediate with dihydroxyacetone-P of the active site. Substrate contacts are provided by residues 266-268 (SGG) and arginine 298. Residue serine 350 is modified to Phosphoserine.

Belongs to the class I fructose-bisphosphate aldolase family. Homotetramer. Interacts with TRX3. Post-translationally, S-glutathionylated at Cys-68 and Cys-173. In terms of processing, S-nitrosylated at Cys-173. As to expression, expressed in rosette leaves and cauline leaves.

The protein localises to the cytoplasm. It is found in the cytosol. It carries out the reaction beta-D-fructose 1,6-bisphosphate = D-glyceraldehyde 3-phosphate + dihydroxyacetone phosphate. The protein operates within carbohydrate degradation; glycolysis; D-glyceraldehyde 3-phosphate and glycerone phosphate from D-glucose: step 4/4. In terms of biological role, fructose-bisphosphate aldolase that plays a key role in glycolysis and gluconeogenesis. The protein is Fructose-bisphosphate aldolase 5, cytosolic of Arabidopsis thaliana (Mouse-ear cress).